Here is a 147-residue protein sequence, read N- to C-terminus: Large ribosomal subunit protein uL22 (147 aa).

Residues E110 to S147 are disordered. The segment covering K117–K140 has biased composition (low complexity).

Belongs to the universal ribosomal protein uL22 family. In terms of assembly, part of the 50S ribosomal subunit.

This protein binds specifically to 23S rRNA; its binding is stimulated by other ribosomal proteins, e.g. L4, L17, and L20. It is important during the early stages of 50S assembly. It makes multiple contacts with different domains of the 23S rRNA in the assembled 50S subunit and ribosome. In terms of biological role, the globular domain of the protein is located near the polypeptide exit tunnel on the outside of the subunit, while an extended beta-hairpin is found that lines the wall of the exit tunnel in the center of the 70S ribosome. In Campylobacter jejuni subsp. jejuni serotype O:6 (strain 81116 / NCTC 11828), this protein is Large ribosomal subunit protein uL22.